The chain runs to 183 residues: Ribosome maturation factor RimM (183 aa).

A PRC barrel domain is found at 95–171 (DPDEFYDHEL…VVVIDPPEGL (77 aa)).

Belongs to the RimM family. Binds ribosomal protein uS19.

It localises to the cytoplasm. Its function is as follows. An accessory protein needed during the final step in the assembly of 30S ribosomal subunit, possibly for assembly of the head region. Essential for efficient processing of 16S rRNA. May be needed both before and after RbfA during the maturation of 16S rRNA. It has affinity for free ribosomal 30S subunits but not for 70S ribosomes. The polypeptide is Ribosome maturation factor RimM (Rhodococcus opacus (strain B4)).